Reading from the N-terminus, the 397-residue chain is uncharacterized protein (397 aa).

[4Fe-4S] cluster is bound by residues Cys-8, Cys-14, Cys-17, and Cys-95. Gln-229, Tyr-258, Glu-279, and Asp-325 together coordinate S-adenosyl-L-methionine. Cys-352 functions as the Nucleophile in the catalytic mechanism.

Belongs to the class I-like SAM-binding methyltransferase superfamily. RNA M5U methyltransferase family.

This is an uncharacterized protein from Chlamydia muridarum (strain MoPn / Nigg).